The following is a 557-amino-acid chain: MDIENDIRNRRIIRNISNLLDDDILCDVIITIGDGEEIKAHKTILAAGSTYFKTMFTTPMIARDLVTRVNLQMFDKDAVKNIVQYLYNRHISSMNVIDVLKCADYLLIDDLVADCESYIKDYINHDTCIYMYHKLYEMVHIPIVKYIKRMLMSNIPTLITTDAFKKTVFEILFDIISTNDNVYLYREGYKVTILLKWLEYNHITEEQLLCILSCIDIQNLDKKSRLLLYSNKTINMYPSCIQFLLDNKQNRNIIPRQLCLACHDTNYNVCNPCILVYNINTMEYSVISTIPNHIINYASAIVDNEIIIAGGYNFNNPSLNKVYKINIENKIHVELPPMIKNRCRFSLAVIDDTIYAIGGQNGTNVERTIECYTLGDDKWKMLPDMPIALSSYGMCVLDQYIYIIGGRTQHIDYTSVHTVNSIDMEEDTNISNKVIRYDTVNNIWETLPNFWTGTINPGVVSHKDDIYVVCDIKDEKNVKTCIFRYNTNTYNGWELVTTTESRLSALHTILHDNTIMMLHCYESYMLQDTFNVYTREWNHMCHQHSNSYIMHNILPIY.

Residues Cys26–Asn95 form the BTB domain. The BACK domain maps to His133 to Lys223. Kelch repeat units follow at residues Glu305–Asp352, Thr353–Gln399, and Ile401–Asp464.

As to quaternary structure, interacts (via BTB domain) with host CUL3.

It localises to the host cytoplasm. Probable substrate-specific adapter of CUL3-containing E3 ubiquitin-protein ligases which mediate the ubiquitination and subsequent proteasomal degradation of host target proteins. This Bos taurus (Bovine) protein is Kelch repeat and BTB domain-containing protein 2 (KBTB2).